Reading from the N-terminus, the 227-residue chain is Cytidylate kinase (227 aa).

Position 10–18 (10–18 (GPSGSGKGT)) interacts with ATP.

The protein belongs to the cytidylate kinase family. Type 1 subfamily.

It localises to the cytoplasm. It catalyses the reaction CMP + ATP = CDP + ADP. It carries out the reaction dCMP + ATP = dCDP + ADP. The protein is Cytidylate kinase of Acinetobacter baylyi (strain ATCC 33305 / BD413 / ADP1).